A 180-amino-acid polypeptide reads, in one-letter code: Large ribosomal subunit protein uL6 (180 aa).

The protein belongs to the universal ribosomal protein uL6 family. As to quaternary structure, part of the 50S ribosomal subunit.

Functionally, this protein binds to the 23S rRNA, and is important in its secondary structure. It is located near the subunit interface in the base of the L7/L12 stalk, and near the tRNA binding site of the peptidyltransferase center. This Prosthecochloris aestuarii (strain DSM 271 / SK 413) protein is Large ribosomal subunit protein uL6.